Here is a 716-residue protein sequence, read N- to C-terminus: Fatty acid oxidation complex subunit alpha (716 aa).

The interval 1–189 (MIYQSPTIQV…KVGAVDAVVA (189 aa)) is enoyl-CoA hydratase/isomerase. A substrate-binding site is contributed by Asp296. A 3-hydroxyacyl-CoA dehydrogenase region spans residues 311-716 (KEVNNAAVLG…AANNGSYYQA (406 aa)). Residues Met324, Asp343, 400–402 (VVE), Lys407, and Ser429 contribute to the NAD(+) site. Residue His450 is the For 3-hydroxyacyl-CoA dehydrogenase activity of the active site. Position 453 (Asn453) interacts with NAD(+). Substrate contacts are provided by Asn500 and Tyr660.

It in the N-terminal section; belongs to the enoyl-CoA hydratase/isomerase family. The protein in the C-terminal section; belongs to the 3-hydroxyacyl-CoA dehydrogenase family. Heterotetramer of two alpha chains (FadB) and two beta chains (FadA).

It carries out the reaction a (3S)-3-hydroxyacyl-CoA + NAD(+) = a 3-oxoacyl-CoA + NADH + H(+). The enzyme catalyses a (3S)-3-hydroxyacyl-CoA = a (2E)-enoyl-CoA + H2O. It catalyses the reaction a 4-saturated-(3S)-3-hydroxyacyl-CoA = a (3E)-enoyl-CoA + H2O. The catalysed reaction is (3S)-3-hydroxybutanoyl-CoA = (3R)-3-hydroxybutanoyl-CoA. It carries out the reaction a (3Z)-enoyl-CoA = a 4-saturated (2E)-enoyl-CoA. The enzyme catalyses a (3E)-enoyl-CoA = a 4-saturated (2E)-enoyl-CoA. The protein operates within lipid metabolism; fatty acid beta-oxidation. Functionally, involved in the aerobic and anaerobic degradation of long-chain fatty acids via beta-oxidation cycle. Catalyzes the formation of 3-oxoacyl-CoA from enoyl-CoA via L-3-hydroxyacyl-CoA. It can also use D-3-hydroxyacyl-CoA and cis-3-enoyl-CoA as substrate. The sequence is that of Fatty acid oxidation complex subunit alpha from Shewanella baltica (strain OS155 / ATCC BAA-1091).